A 356-amino-acid chain; its full sequence is Popeye domain-containing protein 1 (356 aa).

Residues 1–48 are Extracellular-facing; sequence MNFTEPSPLAQSTVVGFLPELESLTPVPSNETSCENWREVHHLVFHAA. N-linked (GlcNAc...) asparagine glycosylation is found at Asn-2 and Asn-30. A helical transmembrane segment spans residues 49 to 69; it reads NVCFAVGLLIPTTLHLHMILL. Residue Arg-70 is a topological domain, cytoplasmic. A helical transmembrane segment spans residues 71-91; it reads VMLSIGCTLYVVWATLYRCAL. Position 92 (Asp-92) is a topological domain, extracellular. Residues 93 to 113 traverse the membrane as a helical segment; it reads MMIWNSVFLGINILHLSYLLY. Residues 93-115 are required for interaction with CAV3; that stretch reads MMIWNSVFLGINILHLSYLLYKK. The Cytoplasmic segment spans residues 114–356; it reads KKRPVKIEKD…VPVSPAHQLP (243 aa). A required for interaction with KCNK2 region spans residues 136–186; it reads RVPPDLFRRLTGQFCVIQTLKRGQVYATEDKTSVDDRLSILLKGRMKVSYR. A phosphoserine mark is found at Ser-295 and Ser-318. Positions 313-323 are enriched in low complexity; it reads SSSTASLPMSS. Residues 313-356 form a disordered region; that stretch reads SSSTASLPMSSPQQRASPKMKPIEEGLEDDDEVFVPVSPAHQLP.

This sequence belongs to the popeye family. Homodimer. Homodimerization requires the C-terminus cytoplasmic region. Interacts (via the C-terminus cytoplasmic tail) with TJP1. Interacts (via the C-terminus cytoplasmic tail) with ARHGEF25/GEFT (via the DH domain). Interacts (via the C-terminus cytoplasmic tail) with VAMP3. Interacts with KCNK2; the interaction enhances KCNK2 surface expression and is inhibited by cAMP. Interacts with CAV3. As to expression, strongly expressed in heart and skeletal muscle. Weakly expressed in brain, spleen, liver, kidney and lung.

It localises to the lateral cell membrane. It is found in the cell junction. Its subcellular location is the tight junction. The protein resides in the membrane. The protein localises to the cell membrane. It localises to the sarcolemma. It is found in the caveola. Its function is as follows. Cell adhesion molecule involved in the establishment and/or maintenance of cell integrity. Involved in the formation and regulation of the tight junction (TJ) paracellular permeability barrier in epithelial cells. Plays a role in VAMP3-mediated vesicular transport and recycling of different receptor molecules through its interaction with VAMP3. Plays a role in the regulation of cell shape and movement by modulating the Rho-family GTPase activity through its interaction with ARHGEF25/GEFT. Induces primordial adhesive contact and aggregation of epithelial cells in a Ca(2+)-independent manner. Important for skeletal muscle and heart development. Also involved in striated muscle regeneration and repair and in the regulation of cell spreading. Important for the maintenance of cardiac function. Plays a regulatory function in heart rate dynamics mediated, at least in part, through cAMP-binding and, probably, by increasing cell surface expression of the potassium channel KCNK2 and enhancing current density. Is a caveolae-associated protein important for the preservation of caveolae structural and functional integrity as well as for heart protection against ischemia injury. This Rattus norvegicus (Rat) protein is Popeye domain-containing protein 1 (Popdc1).